The following is a 238-amino-acid chain: 3,4-dihydroxy-2-butanone 4-phosphate synthase (238 aa).

D-ribulose 5-phosphate-binding positions include 26-27 (RE), D31, 166-170 (RVGQT), and E190. E27 provides a ligand contact to Mg(2+).

Belongs to the DHBP synthase family. As to quaternary structure, homodimer. Requires Mg(2+) as cofactor. Mn(2+) serves as cofactor.

The enzyme catalyses D-ribulose 5-phosphate = (2S)-2-hydroxy-3-oxobutyl phosphate + formate + H(+). Its pathway is cofactor biosynthesis; riboflavin biosynthesis; 2-hydroxy-3-oxobutyl phosphate from D-ribulose 5-phosphate: step 1/1. Functionally, catalyzes the conversion of D-ribulose 5-phosphate to formate and 3,4-dihydroxy-2-butanone 4-phosphate. The polypeptide is 3,4-dihydroxy-2-butanone 4-phosphate synthase (Archaeoglobus fulgidus (strain ATCC 49558 / DSM 4304 / JCM 9628 / NBRC 100126 / VC-16)).